The following is a 370-amino-acid chain: Histidinol-phosphate aminotransferase 1 (370 aa).

K222 is modified (N6-(pyridoxal phosphate)lysine).

This sequence belongs to the class-II pyridoxal-phosphate-dependent aminotransferase family. Histidinol-phosphate aminotransferase subfamily. As to quaternary structure, homodimer. It depends on pyridoxal 5'-phosphate as a cofactor.

It catalyses the reaction L-histidinol phosphate + 2-oxoglutarate = 3-(imidazol-4-yl)-2-oxopropyl phosphate + L-glutamate. It participates in amino-acid biosynthesis; L-histidine biosynthesis; L-histidine from 5-phospho-alpha-D-ribose 1-diphosphate: step 7/9. The protein is Histidinol-phosphate aminotransferase 1 of Bacillus thuringiensis subsp. konkukian (strain 97-27).